A 364-amino-acid polypeptide reads, in one-letter code: UDP-N-acetylglucosamine--N-acetylmuramyl-(pentapeptide) pyrophosphoryl-undecaprenol N-acetylglucosamine transferase (364 aa).

Residues 12 to 14 (TGG), N124, R167, S195, I249, 268 to 273 (ALTVSE), and Q294 contribute to the UDP-N-acetyl-alpha-D-glucosamine site.

It belongs to the glycosyltransferase 28 family. MurG subfamily.

It is found in the cell inner membrane. It catalyses the reaction di-trans,octa-cis-undecaprenyl diphospho-N-acetyl-alpha-D-muramoyl-L-alanyl-D-glutamyl-meso-2,6-diaminopimeloyl-D-alanyl-D-alanine + UDP-N-acetyl-alpha-D-glucosamine = di-trans,octa-cis-undecaprenyl diphospho-[N-acetyl-alpha-D-glucosaminyl-(1-&gt;4)]-N-acetyl-alpha-D-muramoyl-L-alanyl-D-glutamyl-meso-2,6-diaminopimeloyl-D-alanyl-D-alanine + UDP + H(+). The protein operates within cell wall biogenesis; peptidoglycan biosynthesis. In terms of biological role, cell wall formation. Catalyzes the transfer of a GlcNAc subunit on undecaprenyl-pyrophosphoryl-MurNAc-pentapeptide (lipid intermediate I) to form undecaprenyl-pyrophosphoryl-MurNAc-(pentapeptide)GlcNAc (lipid intermediate II). The sequence is that of UDP-N-acetylglucosamine--N-acetylmuramyl-(pentapeptide) pyrophosphoryl-undecaprenol N-acetylglucosamine transferase from Alteromonas mediterranea (strain DSM 17117 / CIP 110805 / LMG 28347 / Deep ecotype).